The following is a 291-amino-acid chain: Urease accessory protein UreD (291 aa).

Belongs to the UreD family. UreD, UreF and UreG form a complex that acts as a GTP-hydrolysis-dependent molecular chaperone, activating the urease apoprotein by helping to assemble the nickel containing metallocenter of UreC. The UreE protein probably delivers the nickel.

The protein resides in the cytoplasm. In terms of biological role, required for maturation of urease via the functional incorporation of the urease nickel metallocenter. This chain is Urease accessory protein UreD, found in Acinetobacter baumannii (strain ATCC 17978 / DSM 105126 / CIP 53.77 / LMG 1025 / NCDC KC755 / 5377).